The sequence spans 117 residues: MSNVNSRLRRARKTRAKIAELKAIRLSVHRSNCHIYAQIIAETGDKVLASASTLEVEVRKDIKNGGNIAAAALVGKRIAEKAKAAGITTVAFDRSGYKYHGRIKALADAAREHGLSF.

This sequence belongs to the universal ribosomal protein uL18 family. Part of the 50S ribosomal subunit; part of the 5S rRNA/L5/L18/L25 subcomplex. Contacts the 5S and 23S rRNAs.

Functionally, this is one of the proteins that bind and probably mediate the attachment of the 5S RNA into the large ribosomal subunit, where it forms part of the central protuberance. This chain is Large ribosomal subunit protein uL18, found in Methylobacillus flagellatus (strain ATCC 51484 / DSM 6875 / VKM B-1610 / KT).